The sequence spans 481 residues: Glutamate--cysteine ligase (481 aa).

Belongs to the glutamate--cysteine ligase type 1 family. Type 1 subfamily.

It catalyses the reaction L-cysteine + L-glutamate + ATP = gamma-L-glutamyl-L-cysteine + ADP + phosphate + H(+). It participates in sulfur metabolism; glutathione biosynthesis; glutathione from L-cysteine and L-glutamate: step 1/2. This Clostridium acetobutylicum (strain ATCC 824 / DSM 792 / JCM 1419 / IAM 19013 / LMG 5710 / NBRC 13948 / NRRL B-527 / VKM B-1787 / 2291 / W) protein is Glutamate--cysteine ligase.